The primary structure comprises 151 residues: Small ribosomal subunit protein uS15 (151 aa).

Belongs to the universal ribosomal protein uS15 family.

This Choristoneura parallela (Spotted fireworm moth) protein is Small ribosomal subunit protein uS15 (RpS13).